The sequence spans 339 residues: DNA-directed RNA polymerase subunit alpha (339 aa).

The alpha N-terminal domain (alpha-NTD) stretch occupies residues 1 to 235 (MVLQKNWQSL…DQLQLFINFD (235 aa)). The segment at 251-339 (FNRNLLRKVD…DLAKRLDEPF (89 aa)) is alpha C-terminal domain (alpha-CTD).

Belongs to the RNA polymerase alpha chain family. Homodimer. The RNAP catalytic core consists of 2 alpha, 1 beta, 1 beta' and 1 omega subunit. When a sigma factor is associated with the core the holoenzyme is formed, which can initiate transcription.

The catalysed reaction is RNA(n) + a ribonucleoside 5'-triphosphate = RNA(n+1) + diphosphate. Functionally, DNA-dependent RNA polymerase catalyzes the transcription of DNA into RNA using the four ribonucleoside triphosphates as substrates. This is DNA-directed RNA polymerase subunit alpha from Gluconacetobacter diazotrophicus (strain ATCC 49037 / DSM 5601 / CCUG 37298 / CIP 103539 / LMG 7603 / PAl5).